A 436-amino-acid chain; its full sequence is KICSTOR complex protein kaptin (436 aa).

M1 carries the post-translational modification N-acetylmethionine.

As to quaternary structure, part of the KICSTOR complex composed of KPTN, ITFG2, KICS2 and SZT2. SZT2 probably serves as a link between the other three proteins in the KICSTOR complex and mediates the direct interaction with the GATOR1 complex. May associate with F-actin filaments.

Its subcellular location is the lysosome membrane. It is found in the cell projection. The protein localises to the lamellipodium. The protein resides in the stereocilium. Functionally, as part of the KICSTOR complex functions in the amino acid-sensing branch of the TORC1 signaling pathway. Recruits, in an amino acid-independent manner, the GATOR1 complex to the lysosomal membranes and allows its interaction with GATOR2 and the RAG GTPases. Functions upstream of the RAG GTPases and is required to negatively regulate mTORC1 signaling in absence of amino acids. In absence of the KICSTOR complex mTORC1 is constitutively localized to the lysosome and activated. The KICSTOR complex is also probably involved in the regulation of mTORC1 by glucose. In Homo sapiens (Human), this protein is KICSTOR complex protein kaptin.